A 301-amino-acid polypeptide reads, in one-letter code: MANLRDIRKKIGSVKNTQKITHAMKLVSTSKLRKAEEVARNSRAYALKLDAVFDDVLSKMKNQGIEDIQSKYFRELERLEIKKVDIIFITADKGLCGGFNTNTIKKVLACTNEYKEKDIKVRLRGIGKKGNEYFSFNGIEVLDKINNLSSMPNYERAQEFMKKVVEDYLSGKTDKVIIIHNGFKNMITQEIRVKTILPIGYQIIHQNPQPSEAQETITSEPSGSEDEILDSLAEKYVEYSLYYALIDSLAAEHSARMQAMDTATNNAKDLVKTLTISYNKARQEAITTELVEINAGVEALK.

The protein belongs to the ATPase gamma chain family. In terms of assembly, F-type ATPases have 2 components, CF(1) - the catalytic core - and CF(0) - the membrane proton channel. CF(1) has five subunits: alpha(3), beta(3), gamma(1), delta(1), epsilon(1). CF(0) has three main subunits: a, b and c.

It localises to the cell inner membrane. Functionally, produces ATP from ADP in the presence of a proton gradient across the membrane. The gamma chain is believed to be important in regulating ATPase activity and the flow of protons through the CF(0) complex. This chain is ATP synthase gamma chain, found in Helicobacter pylori (strain G27).